Reading from the N-terminus, the 486-residue chain is CUGBP Elav-like family member 4 (486 aa).

Residues 1 to 298 (MYIKMATLAN…AAFAAAQMQQ (298 aa)) form a sufficient for RNA-binding and MSE-dependent splicing activity region. The span at 18–28 (LSTNGLGSSPG) shows a compositional bias: polar residues. Disordered stretches follow at residues 18–39 (LSTNGLGSSPGSAGHMNGLSHS) and 121–149 (LPGMNRPIQVKPADSESRGGSSCLRQPPS). The 82-residue stretch at 54–135 (IKLFIGQIPR…RPIQVKPADS (82 aa)) folds into the RRM 1 domain. Positions 138–149 (RGGSSCLRQPPS) are enriched in polar residues. The RRM 2 domain maps to 152-232 (RKLFVGMLNK…SSLVVKFADT (81 aa)). The necessary for TNNT2 exon 5 inclusion stretch occupies residues 239 to 258 (RRMQQMAGQMGMFNPMAIPF). The RRM 3 domain maps to 404–479 (PQPPPMIPQQ…KRLKVQLKRP (76 aa)).

Belongs to the CELF/BRUNOL family. In terms of tissue distribution, ubiquitous. Strongly expressed in the cerebellum, hippocampus, amygdala, temporal and frontal cortex and frontal lobes.

It localises to the nucleus. The protein resides in the cytoplasm. Its function is as follows. RNA-binding protein implicated in the regulation of pre-mRNA alternative splicing. Mediates exon inclusion and/or exclusion in pre-mRNA that are subject to tissue-specific and developmentally regulated alternative splicing. Specifically activates exon 5 inclusion of cardiac isoforms of TNNT2 during heart remodeling at the juvenile to adult transition. Promotes exclusion of both the smooth muscle (SM) and non-muscle (NM) exons in actinin pre-mRNAs. Activates the splicing of MAPT/Tau exon 10. Binds to muscle-specific splicing enhancer (MSE) intronic sites flanking the alternative exon 5 of TNNT2 pre-mRNA. The sequence is that of CUGBP Elav-like family member 4 (CELF4) from Homo sapiens (Human).